Here is a 490-residue protein sequence, read N- to C-terminus: ABC transporter ATP-binding protein ModF (490 aa).

2 ABC transporter domains span residues 4–235 and 261–489; these read LQIL…AHSE and IVLN…LTKI. Residues 36–43 and 293–300 contribute to the ATP site; these read GSNGSGKS and GPNGAGKS.

The protein belongs to the ABC transporter superfamily.

The protein localises to the cell inner membrane. Functionally, probably not involved in the transport of molybdenum into the cell. The protein is ABC transporter ATP-binding protein ModF (modF) of Escherichia coli (strain K12).